A 338-amino-acid chain; its full sequence is MRLYELSFAQIEDFFYKLAEVKDIIKDSGLMEFLPELKKLDSTIQTGTTRVKHAFPIFQKGGVVMDITNVQQAQIAEEAGAVAVMVLDKLPYDVRKSGGVARMADPKIIGEVMNSITIPVMAKVRIGHYYEAKLLEALGVDMIDESEVLTPADEEHHINKWEFSVPFVNGARNLGEALRRTVEGASMIRTKGEAGTGNVSEAVKHMKIINSEIRSLISMSEEDRVKKAREYQVPYQLVELTAKIKRLPIVNFAAGGIATPADAALMMWLGADGLFVGSGIFKSQDPDERAKAVVLAAACWEYPEIVLEAQKMISEQKSMMGIDIKSLKPEELLQVRGL.

Residue D66 coordinates D-ribose 5-phosphate. K123 (schiff-base intermediate with D-ribose 5-phosphate) is an active-site residue. G195 is a binding site for D-ribose 5-phosphate. K207 contributes to the D-glyceraldehyde 3-phosphate binding site. Residues G256 and 277–278 (GS) each bind D-ribose 5-phosphate.

The protein belongs to the PdxS/SNZ family. In terms of assembly, in the presence of PdxT, forms a dodecamer of heterodimers.

The enzyme catalyses aldehydo-D-ribose 5-phosphate + D-glyceraldehyde 3-phosphate + L-glutamine = pyridoxal 5'-phosphate + L-glutamate + phosphate + 3 H2O + H(+). It participates in cofactor biosynthesis; pyridoxal 5'-phosphate biosynthesis. In terms of biological role, catalyzes the formation of pyridoxal 5'-phosphate from ribose 5-phosphate (RBP), glyceraldehyde 3-phosphate (G3P) and ammonia. The ammonia is provided by the PdxT subunit. Can also use ribulose 5-phosphate and dihydroxyacetone phosphate as substrates, resulting from enzyme-catalyzed isomerization of RBP and G3P, respectively. The polypeptide is Pyridoxal 5'-phosphate synthase subunit PdxS (Saccharolobus islandicus (strain Y.N.15.51 / Yellowstone #2) (Sulfolobus islandicus)).